Reading from the N-terminus, the 257-residue chain is GTP cyclohydrolase FolE2 (257 aa).

The protein belongs to the GTP cyclohydrolase IV family.

It catalyses the reaction GTP + H2O = 7,8-dihydroneopterin 3'-triphosphate + formate + H(+). The protein operates within cofactor biosynthesis; 7,8-dihydroneopterin triphosphate biosynthesis; 7,8-dihydroneopterin triphosphate from GTP: step 1/1. Converts GTP to 7,8-dihydroneopterin triphosphate. The sequence is that of GTP cyclohydrolase FolE2 from Syntrophobacter fumaroxidans (strain DSM 10017 / MPOB).